The following is a 125-amino-acid chain: Small ribosomal subunit protein uS13 (125 aa).

The interval 93 to 125 (RRGLPVRGQRTKTNARTRKGPKRTVAGKKKAGR) is disordered.

The protein belongs to the universal ribosomal protein uS13 family. Part of the 30S ribosomal subunit. Forms a loose heterodimer with protein S19. Forms two bridges to the 50S subunit in the 70S ribosome.

Its function is as follows. Located at the top of the head of the 30S subunit, it contacts several helices of the 16S rRNA. In the 70S ribosome it contacts the 23S rRNA (bridge B1a) and protein L5 of the 50S subunit (bridge B1b), connecting the 2 subunits; these bridges are implicated in subunit movement. Contacts the tRNAs in the A and P-sites. This Renibacterium salmoninarum (strain ATCC 33209 / DSM 20767 / JCM 11484 / NBRC 15589 / NCIMB 2235) protein is Small ribosomal subunit protein uS13.